The chain runs to 109 residues: Large ribosomal subunit protein uL22 (109 aa).

It belongs to the universal ribosomal protein uL22 family. Part of the 50S ribosomal subunit.

In terms of biological role, this protein binds specifically to 23S rRNA; its binding is stimulated by other ribosomal proteins, e.g. L4, L17, and L20. It is important during the early stages of 50S assembly. It makes multiple contacts with different domains of the 23S rRNA in the assembled 50S subunit and ribosome. The globular domain of the protein is located near the polypeptide exit tunnel on the outside of the subunit, while an extended beta-hairpin is found that lines the wall of the exit tunnel in the center of the 70S ribosome. The sequence is that of Large ribosomal subunit protein uL22 from Psychrobacter cryohalolentis (strain ATCC BAA-1226 / DSM 17306 / VKM B-2378 / K5).